We begin with the raw amino-acid sequence, 605 residues long: Ankyrin repeat domain-containing protein 13D (605 aa).

ANK repeat units follow at residues 39–68 (RGRT…NVGK) and 72–101 (QGWA…YQRA). Positions 306 to 333 (AQQHSSHTGAPVQQAASPTNPTAISPEE) are disordered. The span at 319–328 (QAASPTNPTA) shows a compositional bias: polar residues. UIM domains follow at residues 482 to 501 (EDDD…AGTE) and 528 to 547 (EEQL…STEP). The segment at 541–605 (LQLSTEPRGP…RILQLSLTEH (65 aa)) is disordered. The segment covering 550 to 563 (PGSPPRTPPAPGPP) has biased composition (pro residues). Serine 552 is modified (phosphoserine). Threonine 556 carries the post-translational modification Phosphothreonine. Residues 564 to 575 (SFEEQLRLALEL) are compositionally biased toward low complexity. UIM domains follow at residues 564-583 (SFEE…QEER) and 589-605 (QEEE…LTEH). Residues 576–589 (SSREQEERERRGQQ) are compositionally biased toward basic and acidic residues.

In terms of assembly, interacts with EGFR (ubiquitinated); the interaction is direct and may regulate EGFR internalization.

The protein localises to the cell membrane. It is found in the late endosome. Its function is as follows. Ubiquitin-binding protein that specifically recognizes and binds 'Lys-63'-linked ubiquitin. Does not bind 'Lys-48'-linked ubiquitin. Positively regulates the internalization of ligand-activated EGFR by binding to the Ub moiety of ubiquitinated EGFR at the cell membrane. This chain is Ankyrin repeat domain-containing protein 13D (ANKRD13D), found in Homo sapiens (Human).